Here is a 285-residue protein sequence, read N- to C-terminus: ATP synthase gamma chain (285 aa).

This sequence belongs to the ATPase gamma chain family. In terms of assembly, F-type ATPases have 2 components, CF(1) - the catalytic core - and CF(0) - the membrane proton channel. CF(1) has five subunits: alpha(3), beta(3), gamma(1), delta(1), epsilon(1). CF(0) has three main subunits: a, b and c.

It is found in the cell membrane. Its function is as follows. Produces ATP from ADP in the presence of a proton gradient across the membrane. The gamma chain is believed to be important in regulating ATPase activity and the flow of protons through the CF(0) complex. In Geobacillus sp. (strain WCH70), this protein is ATP synthase gamma chain.